A 498-amino-acid chain; its full sequence is PHD finger protein 10 (498 aa).

Over residues Met-1–Ala-10 the composition is skewed to low complexity. Residues Met-1–Gln-62 form a disordered region. Ala-2 is modified (N-acetylalanine). Phosphoserine occurs at positions 12, 36, and 50. The essential to induce neural progenitor proliferation stretch occupies residues Met-89 to Gln-185. Positions Met-89–Leu-295 are SAY. Residue Lys-241 forms a Glycyl lysine isopeptide (Lys-Gly) (interchain with G-Cter in SUMO2) linkage. Ser-270 bears the Phosphoserine mark. A compositionally biased stretch (low complexity) spans Glu-285 to Asp-296. Residues Glu-285 to Pro-368 are disordered. An essential to induce neural progenitor proliferation region spans residues Leu-292–Asp-334. Residues Ser-297, Ser-301, Ser-327, and Ser-331 each carry the phosphoserine modification. A compositionally biased stretch (polar residues) spans Thr-318–Glu-328. A compositionally biased stretch (basic and acidic residues) spans Lys-345 to Lys-359. The PHD-type 1; degenerate zinc finger occupies Ile-379–Cys-436. A Glycyl lysine isopeptide (Lys-Gly) (interchain with G-Cter in SUMO2) cross-link involves residue Lys-385. The PHD-type 2; degenerate zinc finger occupies Ile-438 to Ala-481.

Belongs to the SAYP family. Component of neural progenitors-specific chromatin remodeling complex (npBAF complex) composed of at least, ARID1A/BAF250A or ARID1B/BAF250B, SMARCD1/BAF60A, SMARCD3/BAF60C, SMARCA2/BRM/BAF190B, SMARCA4/BRG1/BAF190A, SMARCB1/BAF47, SMARCC1/BAF155, SMARCE1/BAF57, SMARCC2/BAF170, PHF10/BAF45A, ACTL6A/BAF53A and actin. Interacts with ACTL6A/BAF53A, SMARCA2/BRM/BAF190B, SMARCA4/BRG1/BAF190A and PBRM1/BAF180.

Its subcellular location is the nucleus. In terms of biological role, involved in transcription activity regulation by chromatin remodeling. Belongs to the neural progenitors-specific chromatin remodeling complex (npBAF complex) and is required for the proliferation of neural progenitors. During neural development a switch from a stem/progenitor to a post-mitotic chromatin remodeling mechanism occurs as neurons exit the cell cycle and become committed to their adult state. The transition from proliferating neural stem/progenitor cells to post-mitotic neurons requires a switch in subunit composition of the npBAF and nBAF complexes. As neural progenitors exit mitosis and differentiate into neurons, npBAF complexes which contain ACTL6A/BAF53A and PHF10/BAF45A, are exchanged for homologous alternative ACTL6B/BAF53B and DPF1/BAF45B or DPF3/BAF45C subunits in neuron-specific complexes (nBAF). The npBAF complex is essential for the self-renewal/proliferative capacity of the multipotent neural stem cells. The nBAF complex along with CREST plays a role regulating the activity of genes essential for dendrite growth. The chain is PHD finger protein 10 (PHF10) from Homo sapiens (Human).